An 879-amino-acid polypeptide reads, in one-letter code: Phosphoenolpyruvate carboxylase (879 aa).

Residues H138 and K546 contribute to the active site.

This sequence belongs to the PEPCase type 1 family. Mg(2+) serves as cofactor.

It catalyses the reaction oxaloacetate + phosphate = phosphoenolpyruvate + hydrogencarbonate. Functionally, forms oxaloacetate, a four-carbon dicarboxylic acid source for the tricarboxylic acid cycle. The polypeptide is Phosphoenolpyruvate carboxylase (Pectobacterium atrosepticum (strain SCRI 1043 / ATCC BAA-672) (Erwinia carotovora subsp. atroseptica)).